The chain runs to 24 residues: Defensin D6 (24 aa).

It belongs to the DEFL family. Group IV subfamily. As to expression, distributed in the epidermal cell layer of leaves and in the subepidermal layer region of stems. Not in roots.

Its subcellular location is the secreted. The protein resides in the cell wall. In terms of biological role, antimicrobial peptide. Active against Fusarium spp., Gram-positive and Gram-negative bacterial pathogens. In Spinacia oleracea (Spinach), this protein is Defensin D6.